We begin with the raw amino-acid sequence, 573 residues long: Dihydroxy-acid dehydratase (573 aa).

Cys62 contributes to the [2Fe-2S] cluster binding site. Residue Asp94 participates in Mg(2+) binding. Cys135 contributes to the [2Fe-2S] cluster binding site. Residues Asp136 and Lys137 each coordinate Mg(2+). An N6-carboxylysine modification is found at Lys137. Residue Cys212 participates in [2Fe-2S] cluster binding. Residue Glu463 coordinates Mg(2+). The active-site Proton acceptor is Ser489.

It belongs to the IlvD/Edd family. Homodimer. The cofactor is [2Fe-2S] cluster. Requires Mg(2+) as cofactor.

The enzyme catalyses (2R)-2,3-dihydroxy-3-methylbutanoate = 3-methyl-2-oxobutanoate + H2O. The catalysed reaction is (2R,3R)-2,3-dihydroxy-3-methylpentanoate = (S)-3-methyl-2-oxopentanoate + H2O. The protein operates within amino-acid biosynthesis; L-isoleucine biosynthesis; L-isoleucine from 2-oxobutanoate: step 3/4. It functions in the pathway amino-acid biosynthesis; L-valine biosynthesis; L-valine from pyruvate: step 3/4. In terms of biological role, functions in the biosynthesis of branched-chain amino acids. Catalyzes the dehydration of (2R,3R)-2,3-dihydroxy-3-methylpentanoate (2,3-dihydroxy-3-methylvalerate) into 2-oxo-3-methylpentanoate (2-oxo-3-methylvalerate) and of (2R)-2,3-dihydroxy-3-methylbutanoate (2,3-dihydroxyisovalerate) into 2-oxo-3-methylbutanoate (2-oxoisovalerate), the penultimate precursor to L-isoleucine and L-valine, respectively. The protein is Dihydroxy-acid dehydratase of Renibacterium salmoninarum (strain ATCC 33209 / DSM 20767 / JCM 11484 / NBRC 15589 / NCIMB 2235).